Consider the following 336-residue polypeptide: Protein SphX (336 aa).

The first 27 residues, 1–27 (MFDLSRLSRGIVPMALLLLGISACTPS), serve as a signal peptide directing secretion.

The protein belongs to the PstS family.

Its function is as follows. May be involved in the system for phosphate transport across the cytoplasmic membrane. The sequence is that of Protein SphX (sphX) from Synechocystis sp. (strain ATCC 27184 / PCC 6803 / Kazusa).